Here is a 61-residue protein sequence, read N- to C-terminus: Short neurotoxin 1 (61 aa).

Cystine bridges form between cysteine 3–cysteine 23, cysteine 17–cysteine 40, cysteine 42–cysteine 53, and cysteine 54–cysteine 59.

The protein belongs to the three-finger toxin family. Short-chain subfamily. Type I alpha-neurotoxin sub-subfamily. As to expression, expressed by the venom gland.

It is found in the secreted. Its function is as follows. Binds to muscle nicotinic acetylcholine receptor (nAChR) and inhibit acetylcholine from binding to the receptor, thereby impairing neuromuscular transmission. This is Short neurotoxin 1 from Naja samarensis (Peters' cobra).